We begin with the raw amino-acid sequence, 101 residues long: MMLEHVLVLSAYLFSIGIYGLITSRNLVRALMCLELILNAVNLNFVTFSDFFDSRQLKGNIFSIFVIAIAAAEAAIGPAIVSAIYRNRKSTRINQSNLLNK.

3 consecutive transmembrane segments (helical) span residues 2 to 22 (MLEH…YGLI), 32 to 52 (MCLE…SDFF), and 61 to 81 (IFSI…PAIV).

The protein belongs to the complex I subunit 4L family. In terms of assembly, NDH is composed of at least 16 different subunits, 5 of which are encoded in the nucleus.

The protein resides in the plastid. It is found in the chloroplast thylakoid membrane. The enzyme catalyses a plastoquinone + NADH + (n+1) H(+)(in) = a plastoquinol + NAD(+) + n H(+)(out). It catalyses the reaction a plastoquinone + NADPH + (n+1) H(+)(in) = a plastoquinol + NADP(+) + n H(+)(out). NDH shuttles electrons from NAD(P)H:plastoquinone, via FMN and iron-sulfur (Fe-S) centers, to quinones in the photosynthetic chain and possibly in a chloroplast respiratory chain. The immediate electron acceptor for the enzyme in this species is believed to be plastoquinone. Couples the redox reaction to proton translocation, and thus conserves the redox energy in a proton gradient. In Fagopyrum esculentum subsp. ancestrale (Wild buckwheat), this protein is NAD(P)H-quinone oxidoreductase subunit 4L, chloroplastic.